The primary structure comprises 185 residues: MYSTTDFRKGLKIELDGTPFEIVDFQHFKPGKGGAMVRTKLRNILNGRVVDNTFRSGEKVGRPDLESRDMQYLYHEGDDLVLMDLTTYEQLYMHEDLTDGKAGFLKDGQQVRVLLYNGKPLDLELPVSLVLEVVETEPGAKGDTVSNVTKPAKLETGIVVQVPIFVNQGDRIKVDTRSREYLGRE.

Belongs to the elongation factor P family.

The protein resides in the cytoplasm. It functions in the pathway protein biosynthesis; polypeptide chain elongation. Its function is as follows. Involved in peptide bond synthesis. Stimulates efficient translation and peptide-bond synthesis on native or reconstituted 70S ribosomes in vitro. Probably functions indirectly by altering the affinity of the ribosome for aminoacyl-tRNA, thus increasing their reactivity as acceptors for peptidyl transferase. The chain is Elongation factor P from Nitratidesulfovibrio vulgaris (strain DP4) (Desulfovibrio vulgaris).